Here is a 174-residue protein sequence, read N- to C-terminus: Adenylate kinase (174 aa).

Positions 12 to 41 (STGDMLRAAIKAGTPLGLEAKKIIDEGGLV) are NMP. AMP contacts are provided by residues T13, R18, 39–41 (GLV), 67–70 (GFPR), and Q74. The segment at 104-141 (GRRVHLASGRTYHVTYNPPKVEGKDDVTGEDLIQRDDD) is LID. ATP contacts are provided by residues R105 and 114–115 (TY). Residues R138 and R149 each contribute to the AMP site.

Belongs to the adenylate kinase family. In terms of assembly, monomer.

It is found in the cytoplasm. The enzyme catalyses AMP + ATP = 2 ADP. It participates in purine metabolism; AMP biosynthesis via salvage pathway; AMP from ADP: step 1/1. Its function is as follows. Catalyzes the reversible transfer of the terminal phosphate group between ATP and AMP. Plays an important role in cellular energy homeostasis and in adenine nucleotide metabolism. The sequence is that of Adenylate kinase from Neisseria flavescens.